Consider the following 374-residue polypeptide: tRNA-specific 2-thiouridylase MnmA (374 aa).

Residues 17-24 and Met-43 each bind ATP; that span reads GMSGGVDS. An interaction with target base in tRNA region spans residues 103-105; it reads NPD. Cys-108 serves as the catalytic Nucleophile. Cys-108 and Cys-204 are oxidised to a cystine. Residue Gly-132 coordinates ATP. An interaction with tRNA region spans residues 154-156; that stretch reads KDQ. The active-site Cysteine persulfide intermediate is the Cys-204. The interval 316–317 is interaction with tRNA; that stretch reads RY.

This sequence belongs to the MnmA/TRMU family.

The protein resides in the cytoplasm. The enzyme catalyses S-sulfanyl-L-cysteinyl-[protein] + uridine(34) in tRNA + AH2 + ATP = 2-thiouridine(34) in tRNA + L-cysteinyl-[protein] + A + AMP + diphosphate + H(+). Functionally, catalyzes the 2-thiolation of uridine at the wobble position (U34) of tRNA, leading to the formation of s(2)U34. The chain is tRNA-specific 2-thiouridylase MnmA from Pseudomonas putida (strain W619).